The sequence spans 54 residues: UPF0391 membrane protein Pmen_0080 (54 aa).

Helical transmembrane passes span 4–24 (WALTFLIIAIIAAVLGFGGIA) and 28–48 (AGIAKILFVVFLVLFIISFIM).

This sequence belongs to the UPF0391 family.

It is found in the cell membrane. This Ectopseudomonas mendocina (strain ymp) (Pseudomonas mendocina) protein is UPF0391 membrane protein Pmen_0080.